We begin with the raw amino-acid sequence, 513 residues long: Putative ATP-dependent RNA helicase QP509L (513 aa).

Residues K110–P262 enclose the Helicase ATP-binding domain. L123–T130 contacts ATP. The short motif at D215 to H218 is the DEAH box element.

This sequence belongs to the DEAD box helicase family. DEAH subfamily.

The enzyme catalyses ATP + H2O = ADP + phosphate + H(+). This is Putative ATP-dependent RNA helicase QP509L from Ornithodoros (relapsing fever ticks).